The sequence spans 1242 residues: ATP-dependent RNA helicase DHX8 (1242 aa).

Disordered stretches follow at residues 75–283 (RPSR…DDPE) and 354–449 (SMKE…GLLP). Composition is skewed to basic and acidic residues over residues 87 to 97 (TVGDKKEDKKS), 113 to 141 (YSKKEESDDDEKVKAKPEKHSETHKKTDM), and 180 to 196 (RDRDTKRRSRSREDRHS). Basic residues-rich tracts occupy residues 197–222 (DRRRSRSRDKERRRRSRSRDNRRRSR) and 232–252 (DRRHKSSSSRDHHERRRRSRS). The span at 253–269 (RSTERRDRRDRSRDCSE) shows a compositional bias: basic and acidic residues. Residues 285–356 (GKIYSGKIAN…TGQKVSLSMK (72 aa)) form the S1 motif domain. The segment covering 388–399 (FSSSTSMLNLQG) has biased composition (polar residues). A compositionally biased stretch (acidic residues) spans 439-449 (PDFDEETGLLP). The Helicase ATP-binding domain occupies 596 to 759 (IKAVTDNQIL…FFKAPIFTIP (164 aa)). 609-616 (GETGSGKT) is a binding site for ATP. Residues 706–709 (DEAH) carry the DEAH box motif. In terms of domain architecture, Helicase C-terminal spans 777 to 957 (YLDASLITVM…TTVLQLKTMG (181 aa)).

The protein belongs to the DEAD box helicase family. DEAH subfamily. DDX8/PRP22 sub-subfamily. As to quaternary structure, identified in the spliceosome C complex.

Its subcellular location is the nucleus. It catalyses the reaction ATP + H2O = ADP + phosphate + H(+). Functionally, involved in pre-mRNA splicing as component of the spliceosome. Facilitates nuclear export of spliced mRNA by releasing the RNA from the spliceosome. Before and after egg-chamber formation, required for nurse-cell chromatin dispersal (NCCD) probably by playing a role in spliceosome localization to chromatin/interchromatin spaces. This is ATP-dependent RNA helicase DHX8 from Drosophila melanogaster (Fruit fly).